The sequence spans 451 residues: Tubulin alpha-1 chain (451 aa).

Gln11 contacts GTP. Lys40 bears the N6-acetyllysine mark. The GTP site is built by Glu71, Thr145, Thr179, Asn206, and Asn228. Glu71 provides a ligand contact to Mg(2+). Residue Glu254 is part of the active site. Positions 429-451 (EKDYEEVGAESGEGEEGDEGEEY) are disordered. Positions 431–451 (DYEEVGAESGEGEEGDEGEEY) are enriched in acidic residues.

It belongs to the tubulin family. In terms of assembly, dimer of alpha and beta chains. A typical microtubule is a hollow water-filled tube with an outer diameter of 25 nm and an inner diameter of 15 nM. Alpha-beta heterodimers associate head-to-tail to form protofilaments running lengthwise along the microtubule wall with the beta-tubulin subunit facing the microtubule plus end conferring a structural polarity. Microtubules usually have 13 protofilaments but different protofilament numbers can be found in some organisms and specialized cells. Mg(2+) is required as a cofactor. In terms of processing, undergoes a tyrosination/detyrosination cycle, the cyclic removal and re-addition of a C-terminal tyrosine residue by the enzymes tubulin tyrosine carboxypeptidase (TTCP) and tubulin tyrosine ligase (TTL), respectively. Post-translationally, acetylation of alpha chains at Lys-40 stabilizes microtubules and affects affinity and processivity of microtubule motors. This modification has a role in multiple cellular functions, ranging from cell motility, cell cycle progression or cell differentiation to intracellular trafficking and signaling.

The protein localises to the cytoplasm. Its subcellular location is the cytoskeleton. It catalyses the reaction GTP + H2O = GDP + phosphate + H(+). Its function is as follows. Tubulin is the major constituent of microtubules, a cylinder consisting of laterally associated linear protofilaments composed of alpha- and beta-tubulin heterodimers. Microtubules grow by the addition of GTP-tubulin dimers to the microtubule end, where a stabilizing cap forms. Below the cap, tubulin dimers are in GDP-bound state, owing to GTPase activity of alpha-tubulin. The sequence is that of Tubulin alpha-1 chain (TUBA1) from Anemia phyllitidis (Fern).